The primary structure comprises 134 residues: Holo-[acyl-carrier-protein] synthase (134 aa).

The Mg(2+) site is built by D8 and E56.

It belongs to the P-Pant transferase superfamily. AcpS family. Mg(2+) serves as cofactor.

It is found in the cytoplasm. It carries out the reaction apo-[ACP] + CoA = holo-[ACP] + adenosine 3',5'-bisphosphate + H(+). Functionally, transfers the 4'-phosphopantetheine moiety from coenzyme A to a Ser of acyl-carrier-protein. This Clostridium kluyveri (strain ATCC 8527 / DSM 555 / NBRC 12016 / NCIMB 10680 / K1) protein is Holo-[acyl-carrier-protein] synthase.